The chain runs to 1395 residues: DNA-directed RNA polymerase subunit beta' (1395 aa).

Residues Cys70, Cys72, Cys85, and Cys88 each contribute to the Zn(2+) site. Residues Asp470, Asp472, and Asp474 each contribute to the Mg(2+) site. Zn(2+) is bound by residues Cys815, Cys889, Cys896, and Cys899.

Belongs to the RNA polymerase beta' chain family. In terms of assembly, the RNAP catalytic core consists of 2 alpha, 1 beta, 1 beta' and 1 omega subunit. When a sigma factor is associated with the core the holoenzyme is formed, which can initiate transcription. Mg(2+) is required as a cofactor. It depends on Zn(2+) as a cofactor.

The catalysed reaction is RNA(n) + a ribonucleoside 5'-triphosphate = RNA(n+1) + diphosphate. Its function is as follows. DNA-dependent RNA polymerase catalyzes the transcription of DNA into RNA using the four ribonucleoside triphosphates as substrates. This is DNA-directed RNA polymerase subunit beta' from Anaeromyxobacter sp. (strain Fw109-5).